A 32-amino-acid chain; its full sequence is Hemocyanin C chain (32 aa).

Belongs to the tyrosinase family. Hemocyanin subfamily. In terms of tissue distribution, hemolymph.

It localises to the secreted. It is found in the extracellular space. In terms of biological role, hemocyanins are copper-containing oxygen carriers occurring freely dissolved in the hemolymph of many mollusks and arthropods. The chain is Hemocyanin C chain from Cherax destructor (Common yabby crayfish).